Reading from the N-terminus, the 71-residue chain is Beta-defensin 25 (71 aa).

The N-terminal stretch at 1 to 22 (MAKWILLIVALLVLSHVPPGST) is a signal peptide. 3 cysteine pairs are disulfide-bonded: C27/C54, C34/C48, and C38/C55.

The protein belongs to the beta-defensin family.

Its subcellular location is the secreted. Its function is as follows. Has antibacterial activity. The protein is Beta-defensin 25 (Defb25) of Mus musculus (Mouse).